Reading from the N-terminus, the 1213-residue chain is DNA-directed RNA polymerase subunit beta' (1213 aa).

Zn(2+)-binding residues include C60, C62, C75, and C78. Positions 450, 452, and 454 each coordinate Mg(2+). Zn(2+) is bound by residues C819, C893, C900, and C903.

Belongs to the RNA polymerase beta' chain family. In terms of assembly, the RNAP catalytic core consists of 2 alpha, 1 beta, 1 beta' and 1 omega subunit. When a sigma factor is associated with the core the holoenzyme is formed, which can initiate transcription. It depends on Mg(2+) as a cofactor. The cofactor is Zn(2+).

The catalysed reaction is RNA(n) + a ribonucleoside 5'-triphosphate = RNA(n+1) + diphosphate. Its function is as follows. DNA-dependent RNA polymerase catalyzes the transcription of DNA into RNA using the four ribonucleoside triphosphates as substrates. The protein is DNA-directed RNA polymerase subunit beta' of Streptococcus pyogenes serotype M28 (strain MGAS6180).